Here is a 453-residue protein sequence, read N- to C-terminus: Tubulin alpha chain (453 aa).

Gln11 provides a ligand contact to GTP. At Lys40 the chain carries N6-acetyllysine. The GTP site is built by Glu71, Gly144, Thr145, Thr179, Asn206, and Asn228. Residue Glu71 coordinates Mg(2+). The active site involves Glu254.

It belongs to the tubulin family. As to quaternary structure, dimer of alpha and beta chains. A typical microtubule is a hollow water-filled tube with an outer diameter of 25 nm and an inner diameter of 15 nM. Alpha-beta heterodimers associate head-to-tail to form protofilaments running lengthwise along the microtubule wall with the beta-tubulin subunit facing the microtubule plus end conferring a structural polarity. Microtubules usually have 13 protofilaments but different protofilament numbers can be found in some organisms and specialized cells. It depends on Mg(2+) as a cofactor. In terms of processing, undergoes a tyrosination/detyrosination cycle, the cyclic removal and re-addition of a C-terminal tyrosine residue by the enzymes tubulin tyrosine carboxypeptidase (TTCP) and tubulin tyrosine ligase (TTL), respectively. Post-translationally, acetylation of alpha chains at Lys-40 stabilizes microtubules and affects affinity and processivity of microtubule motors. This modification has a role in multiple cellular functions, ranging from cell motility, cell cycle progression or cell differentiation to intracellular trafficking and signaling.

It is found in the cytoplasm. The protein resides in the cytoskeleton. It carries out the reaction GTP + H2O = GDP + phosphate + H(+). Its function is as follows. Tubulin is the major constituent of microtubules, a cylinder consisting of laterally associated linear protofilaments composed of alpha- and beta-tubulin heterodimers. Microtubules grow by the addition of GTP-tubulin dimers to the microtubule end, where a stabilizing cap forms. Below the cap, tubulin dimers are in GDP-bound state, owing to GTPase activity of alpha-tubulin. In Plasmodium falciparum (isolate K1 / Thailand), this protein is Tubulin alpha chain.